A 342-amino-acid polypeptide reads, in one-letter code: Outer spore wall protein RRT8 (342 aa).

The Cytoplasmic segment spans residues 1–109 (MKAGIELISH…VLTNPVYWKH (109 aa)). Residues 110-130 (ILLFAVCYALIFVTIAGLFYV) form a helical membrane-spanning segment. A topological domain (extracellular) is located at residue T131. Residues 132 to 152 (LVPLLVTWAILLLGPLGVILV) form a helical membrane-spanning segment. At 153 to 240 (HIQWILQTNV…PRLLFRMFFK (88 aa)) the chain is on the cytoplasmic side. The helical transmembrane segment at 241–261 (VSNFTSLTLLSLIPIVGPILA) threads the bilayer. At 262–299 (NQLMAPKRTFTYLQRYFLLKGFSKKQAKDFQYEHYASF) the chain is on the extracellular side. A helical transmembrane segment spans residues 300-320 (ICFGMSAGLLELIPFFTIVTI). Residues 321 to 342 (SSNTVGAAKWCTSLLKGERKKE) lie on the Cytoplasmic side of the membrane.

The protein belongs to the LDS family.

The protein localises to the prospore membrane. It is found in the lipid droplet. Its subcellular location is the spore wall. Its function is as follows. Involved in spore wall assembly. May be involved in the modulation of rDNA transcription. The polypeptide is Outer spore wall protein RRT8 (Saccharomyces cerevisiae (strain ATCC 204508 / S288c) (Baker's yeast)).